We begin with the raw amino-acid sequence, 738 residues long: NAD(P)H-quinone oxidoreductase subunit 5, chloroplastic (738 aa).

The next 17 helical transmembrane spans lie at 9–29 (WVIP…LFLI), 39–59 (IWAF…LHLS), 89–109 (VDPL…LVLI), 125–145 (FVYI…SNLI), 147–167 (IYFF…FWFT), 185–205 (GDFG…SLEF), 219–239 (NGIN…GAVA), 258–278 (TPIS…FLLA), 280–300 (LLPL…VGTI), 327–347 (LGYM…FHLI), 354–374 (ALLF…VGYS), 396–416 (TTFL…CFWS), 425–445 (WLYS…TAFY), 542–562 (LFPL…GIPF), 610–630 (SLAI…YSFF), 691–711 (GVID…GEEI), and 717–737 (GRIS…LFFI).

The protein belongs to the complex I subunit 5 family. As to quaternary structure, NDH is composed of at least 16 different subunits, 5 of which are encoded in the nucleus.

Its subcellular location is the plastid. The protein localises to the chloroplast thylakoid membrane. It catalyses the reaction a plastoquinone + NADH + (n+1) H(+)(in) = a plastoquinol + NAD(+) + n H(+)(out). It carries out the reaction a plastoquinone + NADPH + (n+1) H(+)(in) = a plastoquinol + NADP(+) + n H(+)(out). In terms of biological role, NDH shuttles electrons from NAD(P)H:plastoquinone, via FMN and iron-sulfur (Fe-S) centers, to quinones in the photosynthetic chain and possibly in a chloroplast respiratory chain. The immediate electron acceptor for the enzyme in this species is believed to be plastoquinone. Couples the redox reaction to proton translocation, and thus conserves the redox energy in a proton gradient. This chain is NAD(P)H-quinone oxidoreductase subunit 5, chloroplastic (ndhF), found in Saccharum officinarum (Sugarcane).